The primary structure comprises 219 residues: Deoxyribose-phosphate aldolase (219 aa).

Asp-89 functions as the Proton donor/acceptor in the catalytic mechanism. Lys-151 acts as the Schiff-base intermediate with acetaldehyde in catalysis. Residue Lys-180 is the Proton donor/acceptor of the active site.

Belongs to the DeoC/FbaB aldolase family. DeoC type 1 subfamily.

The protein resides in the cytoplasm. It catalyses the reaction 2-deoxy-D-ribose 5-phosphate = D-glyceraldehyde 3-phosphate + acetaldehyde. It functions in the pathway carbohydrate degradation; 2-deoxy-D-ribose 1-phosphate degradation; D-glyceraldehyde 3-phosphate and acetaldehyde from 2-deoxy-alpha-D-ribose 1-phosphate: step 2/2. Its function is as follows. Catalyzes a reversible aldol reaction between acetaldehyde and D-glyceraldehyde 3-phosphate to generate 2-deoxy-D-ribose 5-phosphate. This chain is Deoxyribose-phosphate aldolase, found in Coprothermobacter proteolyticus (strain ATCC 35245 / DSM 5265 / OCM 4 / BT).